A 252-amino-acid polypeptide reads, in one-letter code: Small ribosomal subunit protein uS2A (252 aa).

N-acetylserine is present on S2. Positions 209-252 are disordered; that stretch reads EVEQQAAEETTSTGADAEESKEEVAEGQNEASEWAEENTEAVSW. Acidic residues predominate over residues 241-252; sequence EWAEENTEAVSW.

Belongs to the universal ribosomal protein uS2 family. In terms of assembly, component of the small ribosomal subunit. Mature ribosomes consist of a small (40S) and a large (60S) subunit. The 40S subunit contains about 33 different proteins and 1 molecule of RNA (18S). The 60S subunit contains about 49 different proteins and 3 molecules of RNA (25S, 5.8S and 5S). Interacts with RPS21.

It localises to the cytoplasm. Its function is as follows. Required for the assembly and/or stability of the 40S ribosomal subunit. Required for the processing of the 20S rRNA-precursor to mature 18S rRNA in a late step of the maturation of 40S ribosomal subunits. The protein is Small ribosomal subunit protein uS2A of Vanderwaltozyma polyspora (strain ATCC 22028 / DSM 70294 / BCRC 21397 / CBS 2163 / NBRC 10782 / NRRL Y-8283 / UCD 57-17) (Kluyveromyces polysporus).